A 123-amino-acid polypeptide reads, in one-letter code: Transmembrane protein 254 (123 aa).

Ala-2 carries the N-acetylalanine modification. A run of 3 helical transmembrane segments spans residues 15–35 (LFWFTVITLSFGYYTWVVFWP), 61–81 (LCNGYWLAWLIHVGESLYAIV), and 95–115 (LLWFLQTFFFGIASLTILIAY).

It is found in the membrane. This Homo sapiens (Human) protein is Transmembrane protein 254 (TMEM254).